Reading from the N-terminus, the 333-residue chain is T-cell surface glycoprotein CD1b1 (333 aa).

The signal sequence occupies residues 1-17; sequence MLLVALALLAFLFPAGD. The Extracellular portion of the chain corresponds to 18–302; sequence TQNALQWPTS…LYWGHSISIG (285 aa). Residues N38, N75, and N146 are each glycosylated (N-linked (GlcNAc...) asparagine). Disulfide bonds link C120–C184, C149–C163, and C224–C279. Residues 197 to 295 enclose the Ig-like domain; that stretch reads PDIQKQVKPD…LEGQDIILYW (99 aa). Residues 303–323 form a helical membrane-spanning segment; the sequence is WIILAVLVPCLIVLVLFVLWF. Residues 324 to 333 are Cytoplasmic-facing; sequence YRRWSYEDIL. The Internalization signal motif lies at 329 to 332; it reads YEDI.

In terms of assembly, heterodimer with B2M (beta-2-microglobulin). Interacts with saposin C.

The protein localises to the cell membrane. It localises to the endosome membrane. It is found in the lysosome membrane. Its function is as follows. Antigen-presenting protein that binds self and non-self lipid and glycolipid antigens and presents them to T-cell receptors on natural killer T-cells. This chain is T-cell surface glycoprotein CD1b1 (CD1B1), found in Cavia porcellus (Guinea pig).